Consider the following 679-residue polypeptide: Glycine--tRNA ligase beta subunit (679 aa).

This sequence belongs to the class-II aminoacyl-tRNA synthetase family. In terms of assembly, tetramer of two alpha and two beta subunits.

It localises to the cytoplasm. The enzyme catalyses tRNA(Gly) + glycine + ATP = glycyl-tRNA(Gly) + AMP + diphosphate. In Streptococcus pyogenes serotype M3 (strain ATCC BAA-595 / MGAS315), this protein is Glycine--tRNA ligase beta subunit.